A 100-amino-acid chain; its full sequence is Large ribosomal subunit protein uL23 (100 aa).

It belongs to the universal ribosomal protein uL23 family. Part of the 50S ribosomal subunit. Contacts protein L29, and trigger factor when it is bound to the ribosome.

Functionally, one of the early assembly proteins it binds 23S rRNA. One of the proteins that surrounds the polypeptide exit tunnel on the outside of the ribosome. Forms the main docking site for trigger factor binding to the ribosome. In Yersinia pestis bv. Antiqua (strain Antiqua), this protein is Large ribosomal subunit protein uL23.